A 216-amino-acid chain; its full sequence is Heart- and neural crest derivatives-expressed protein 1 (216 aa).

Disordered regions lie at residues 1 to 20, 53 to 109, and 165 to 203; these read MNLV…HPPH, APDF…RTES, and ELKK…KGRT. Residues 8 to 18 are compositionally biased toward basic residues; it reads AHHHHHHHSHP. Low complexity predominate over residues 65 to 78; it reads TAVAAAAYGPDARP. Positions 92-104 are enriched in basic residues; the sequence is LPKRKGSGPKKER. In terms of domain architecture, bHLH spans 94-146; it reads KRKGSGPKKERRRTESINSAFAELRECIPNVPADTKLSKIKTLRLATSYIAYL. Thr-107 is subject to Phosphothreonine; by PLK4. Ser-109 carries the phosphoserine; by PLK4 modification. The span at 165–174 shows a compositional bias: basic and acidic residues; it reads ELKKTDGGRE.

As to quaternary structure, efficient DNA binding requires dimerization with another bHLH protein. Forms homodimers and heterodimers with TCF3 gene products E12 and E47, HAND2 and HEY1, HEY2 and HEYL (hairy-related transcription factors). Interacts with MDFIC. Interacts with SOX15; the interaction enhances HAND1-induced differentiation of trophoblast giant cells. Phosphorylation by PLK4 disrupts the interaction with MDFIC and leads to translocation into the nucleoplasm, allowing dimerization and transcription factor activity. Smooth muscle cells of the gut and adrenal tissue.

It is found in the nucleus. It localises to the nucleoplasm. The protein localises to the nucleolus. Functionally, transcription factor that plays an essential role in both trophoblast giant cell differentiation and in cardiac morphogenesis. Binds the DNA sequence 5'-NRTCTG-3' (non-canonical E-box). Acts as a transcriptional repressor of SOX15. In the adult, could be required for ongoing expression of cardiac-specific genes. The chain is Heart- and neural crest derivatives-expressed protein 1 (Hand1) from Mus musculus (Mouse).